We begin with the raw amino-acid sequence, 294 residues long: Large ribosomal subunit protein uL4m (294 aa).

The tract at residues 119 to 139 (EVSGGGRKPWQQKGSGRARHG) is disordered. Arg-147 bears the Omega-N-methylarginine mark.

It belongs to the universal ribosomal protein uL4 family. Component of the mitochondrial ribosome large subunit (39S) which comprises a 16S rRNA and about 50 distinct proteins. Interacts with MIEF1 upstream open reading frame protein.

The protein localises to the mitochondrion. This chain is Large ribosomal subunit protein uL4m (Mrpl4), found in Mus musculus (Mouse).